A 2201-amino-acid polypeptide reads, in one-letter code: Genome polyprotein (2201 aa).

Gly-2 is lipidated: N-myristoyl glycine; by host. Residues 2–1511 lie on the Cytoplasmic side of the membrane; sequence GAQVSTQKTG…YVSRAFICLQ (1510 aa). The interval 566–582 is amphipathic alpha-helix; it reads KLQGDVEEAIERARCTV. Residues 858-860 carry the Cell attachment site motif; the sequence is RGD. Residues His-888 and Asp-906 each act as for protease 2A activity in the active site. Cys-923 and Cys-925 together coordinate Zn(2+). The For protease 2A activity role is filled by Cys-977. Cys-983 and His-985 together coordinate Zn(2+). The segment at 1117–1189 is membrane-binding; that stretch reads NDSWLKKFTE…EQSAPSQSDQ (73 aa). An oligomerization region spans residues 1117–1255; it reads NDSWLKKFTE…SPGAGKSVAT (139 aa). The RNA-binding stretch occupies residues 1138 to 1142; the sequence is AIKIQ. Residues 1221–1377 form the SF3 helicase domain; the sequence is EKKMSNYIQF…SMYSQNGKIN (157 aa). The Zn(2+) site is built by Cys-1385, Cys-1397, and Cys-1402. A C4-type; degenerate zinc finger spans residues 1385–1402; it reads CDEECCPVNFKKCCPLVC. Positions 1429–1436 are RNA-binding; it reads EYNHRHSV. Residues 1440-1445 are oligomerization; that stretch reads LEALFQ. Residues 1512–1527 lie within the membrane without spanning it; the sequence is AITTFVSVAGIIYIIY. The Cytoplasmic segment spans residues 1528–2201; sequence KLFAGFQGAY…TLRRKWLDSF (674 aa). Tyr-1537 is subject to O-(5'-phospho-RNA)-tyrosine. Residues 1557-1735 enclose the Peptidase C3 domain; that stretch reads GPAFEFAVAM…FSAALLKHYF (179 aa). Residues His-1596, Glu-1627, and Cys-1703 each act as for protease 3C activity in the active site. Residues 1966-2082 enclose the RdRp catalytic domain; sequence GHLIAFDYSG…SYPWPIDASL (117 aa). Mg(2+) is bound by residues Asp-1972 and Asp-2068.

The protein belongs to the picornaviruses polyprotein family. Interacts with capsid protein VP1 and capsid protein VP3 to form heterotrimeric protomers. As to quaternary structure, interacts with capsid protein VP0, and capsid protein VP3 to form heterotrimeric protomers. Five protomers subsequently associate to form pentamers which serve as building blocks for the capsid. Interacts with capsid protein VP2, capsid protein VP3 and capsid protein VP4 following cleavage of capsid protein VP0. Interacts with host integrin heterodimer ITGAV/ITGB6. In terms of assembly, interacts with capsid protein VP1 and capsid protein VP3 in the mature capsid. Interacts with capsid protein VP0 and capsid protein VP1 to form heterotrimeric protomers. Five protomers subsequently associate to form pentamers which serve as building blocks for the capsid. Interacts with capsid protein VP4 in the mature capsid. Interacts with protein 2C; this interaction may be important for virion morphogenesis. As to quaternary structure, interacts with capsid protein VP1 and capsid protein VP3. In terms of assembly, homodimer. Homohexamer; forms a hexameric ring structure with 6-fold symmetry characteristic of AAA+ ATPases. Interacts (via N-terminus) with host RTN3 (via reticulon domain); this interaction is important for viral replication. Interacts with capsid protein VP3; this interaction may be important for virion morphogenesis. As to quaternary structure, interacts with protein 3CD. In terms of assembly, homodimer. Interacts with host GBF1. Interacts (via GOLD domain) with host ACBD3 (via GOLD domain); this interaction allows the formation of a viral protein 3A/ACBD3 heterotetramer with a 2:2 stoichiometry, which will stimulate the recruitment of host PI4KB in order to synthesize PI4P at the viral RNA replication sites. Interacts with RNA-directed RNA polymerase. As to quaternary structure, interacts with protein 3AB and with RNA-directed RNA polymerase. In terms of assembly, interacts with Viral protein genome-linked and with protein 3CD. Mg(2+) is required as a cofactor. Post-translationally, specific enzymatic cleavages in vivo by the viral proteases yield processing intermediates and the mature proteins. Myristoylation is required for the formation of pentamers during virus assembly. Further assembly of 12 pentamers and a molecule of genomic RNA generates the provirion. In terms of processing, during virion maturation, immature virions are rendered infectious following cleavage of VP0 into VP4 and VP2. This maturation seems to be an autocatalytic event triggered by the presence of RNA in the capsid and it is followed by a conformational change infectious virion. Post-translationally, myristoylation is required during RNA encapsidation and formation of the mature virus particle. VPg is uridylylated by the polymerase into VPg-pUpU. This acts as a nucleotide-peptide primer for the genomic RNA replication.

The protein resides in the virion. The protein localises to the host cytoplasm. It is found in the host cytoplasmic vesicle membrane. It localises to the host nucleus. The catalysed reaction is a ribonucleoside 5'-triphosphate + H2O = a ribonucleoside 5'-diphosphate + phosphate + H(+). It carries out the reaction Selective cleavage of Tyr-|-Gly bond in the picornavirus polyprotein.. The enzyme catalyses RNA(n) + a ribonucleoside 5'-triphosphate = RNA(n+1) + diphosphate. It catalyses the reaction Selective cleavage of Gln-|-Gly bond in the poliovirus polyprotein. In other picornavirus reactions Glu may be substituted for Gln, and Ser or Thr for Gly.. Replication or transcription is subject to high level of random mutations by the nucleotide analog ribavirin. Its function is as follows. Forms an icosahedral capsid of pseudo T=3 symmetry with capsid proteins VP2 and VP3. The capsid is 300 Angstroms in diameter, composed of 60 copies of each capsid protein and enclosing the viral positive strand RNA genome. Capsid protein VP1 mainly forms the vertices of the capsid. Capsid protein VP1 interacts with host integrin ITGAV/ITGB6 to provide virion attachment to target host cells. This attachment induces virion internalization. Tyrosine kinases are probably involved in the entry process. After binding to its receptor, the capsid undergoes conformational changes. Capsid protein VP1 N-terminus (that contains an amphipathic alpha-helix) and capsid protein VP4 are externalized. Together, they shape a pore in the host membrane through which viral genome is translocated to host cell cytoplasm. In terms of biological role, forms an icosahedral capsid of pseudo T=3 symmetry with capsid proteins VP2 and VP3. The capsid is 300 Angstroms in diameter, composed of 60 copies of each capsid protein and enclosing the viral positive strand RNA genome. Lies on the inner surface of the capsid shell. After binding to the host receptor, the capsid undergoes conformational changes. Capsid protein VP4 is released, Capsid protein VP1 N-terminus is externalized, and together, they shape a pore in the host membrane through which the viral genome is translocated into the host cell cytoplasm. Functionally, component of immature procapsids, which is cleaved into capsid proteins VP4 and VP2 after maturation. Allows the capsid to remain inactive before the maturation step. Its function is as follows. Cysteine protease that cleaves viral polyprotein and specific host proteins. It is responsible for the autocatalytic cleavage between the P1 and P2 regions, which is the first cleavage occurring in the polyprotein. Also cleaves the host translation initiation factor EIF4G1, in order to shut down the capped cellular mRNA translation. Inhibits the host nucleus-cytoplasm protein and RNA trafficking by cleaving host members of the nuclear pores. Counteracts stress granule formation probably by antagonizing its assembly or promoting its dissassembly. Cleaves and inhibits host IFIH1/MDA5, thereby inhibiting the type-I IFN production and the establishment of the antiviral state. Cleaves and inhibits host MAVS, thereby inhibiting the type-I IFN production and the establishment of the antiviral state. In terms of biological role, plays an essential role in the virus replication cycle by acting as a viroporin. Creates a pore in the host endoplasmic reticulum and as a consequence releases Ca2+ in the cytoplasm of infected cell. In turn, high levels of cytoplasmic calcium may trigger membrane trafficking and transport of viral ER-associated proteins to viroplasms, sites of viral genome replication. Induces and associates with structural rearrangements of intracellular membranes. Displays RNA-binding, nucleotide binding and NTPase activities. May play a role in virion morphogenesis and viral RNA encapsidation by interacting with the capsid protein VP3. Functionally, localizes the viral replication complex to the surface of membranous vesicles. Together with protein 3CD binds the Cis-Active RNA Element (CRE) which is involved in RNA synthesis initiation. Acts as a cofactor to stimulate the activity of 3D polymerase, maybe through a nucleid acid chaperone activity. Its function is as follows. Localizes the viral replication complex to the surface of membranous vesicles. It inhibits host cell endoplasmic reticulum-to-Golgi apparatus transport and causes the disassembly of the Golgi complex, possibly through GBF1 interaction. This would result in depletion of MHC, trail receptors and IFN receptors at the host cell surface. Plays an essential role in viral RNA replication by recruiting ACBD3 and PI4KB at the viral replication sites, thereby allowing the formation of the rearranged membranous structures where viral replication takes place. In terms of biological role, acts as a primer for viral RNA replication and remains covalently bound to viral genomic RNA. VPg is uridylylated prior to priming replication into VPg-pUpU. The oriI viral genomic sequence may act as a template for this. The VPg-pUpU is then used as primer on the genomic RNA poly(A) by the RNA-dependent RNA polymerase to replicate the viral genome. During genome replication, the VPg-RNA linkage is removed by the host TDP2, thereby accelerating replication. During the late stage of the replication cycle, host TDP2 is excluded from sites of viral RNA synthesis and encapsidation, allowing for the generation of progeny virions. Involved in the viral replication complex and viral polypeptide maturation. It exhibits protease activity with a specificity and catalytic efficiency that is different from protease 3C. Protein 3CD lacks polymerase activity. Protein 3CD binds to the 5'UTR of the viral genome. Functionally, replicates the viral genomic RNA on the surface of intracellular membranes. May form linear arrays of subunits that propagate along a strong head-to-tail interaction called interface-I. Covalently attaches UMP to a tyrosine of VPg, which is used to prime RNA synthesis. The positive stranded RNA genome is first replicated at virus induced membranous vesicles, creating a dsRNA genomic replication form. This dsRNA is then used as template to synthesize positive stranded RNA genomes. ss(+)RNA genomes are either translated, replicated or encapsidated. Its function is as follows. Major viral protease that mediates proteolytic processing of the polyprotein. Cleaves host EIF5B, contributing to host translation shutoff. Also cleaves host PABPC1, contributing to host translation shutoff. Cleaves host NLRP1, triggers host N-glycine-mediated degradation of the autoinhibitory NLRP1 N-terminal fragment. In Coxsackievirus A9 (strain Griggs), this protein is Genome polyprotein.